The following is a 90-amino-acid chain: Inactive casein kinase II subunit alpha-2 (90 aa).

Residues 40–48 (VGRGKYSEV) and lysine 63 each bind ATP.

It belongs to the protein kinase superfamily. Ser/Thr protein kinase family. CK2 subfamily.

The Nipponbare allele of HD6 contains a premature stop codon, resulting in a truncated non-functional product. This Oryza sativa subsp. japonica (Rice) protein is Inactive casein kinase II subunit alpha-2.